The primary structure comprises 103 residues: Large ribosomal subunit protein uL23 (103 aa).

This sequence belongs to the universal ribosomal protein uL23 family. In terms of assembly, part of the 50S ribosomal subunit. Contacts protein L29, and trigger factor when it is bound to the ribosome.

Functionally, one of the early assembly proteins it binds 23S rRNA. One of the proteins that surrounds the polypeptide exit tunnel on the outside of the ribosome. Forms the main docking site for trigger factor binding to the ribosome. The sequence is that of Large ribosomal subunit protein uL23 from Prochlorococcus marinus (strain NATL1A).